Here is a 454-residue protein sequence, read N- to C-terminus: Glutamate--tRNA ligase (454 aa).

The 'HIGH' region motif lies at Pro-7–Gly-17. Residues Cys-96, Cys-98, Cys-123, and Asp-125 each contribute to the Zn(2+) site. The short motif at Arg-230–Arg-234 is the 'KMSKS' region element. An ATP-binding site is contributed by Lys-233.

Belongs to the class-I aminoacyl-tRNA synthetase family. Glutamate--tRNA ligase type 1 subfamily. As to quaternary structure, monomer. Zn(2+) is required as a cofactor.

The protein resides in the cytoplasm. The catalysed reaction is tRNA(Glu) + L-glutamate + ATP = L-glutamyl-tRNA(Glu) + AMP + diphosphate. Catalyzes the attachment of glutamate to tRNA(Glu) in a two-step reaction: glutamate is first activated by ATP to form Glu-AMP and then transferred to the acceptor end of tRNA(Glu). The protein is Glutamate--tRNA ligase of Ruthia magnifica subsp. Calyptogena magnifica.